Consider the following 656-residue polypeptide: Replication protein A 70 kDa DNA-binding subunit A (656 aa).

A DNA-binding region (OB) is located at residues 225-307 (AIKARVTAKG…NHLNNEWEIL (83 aa)). Residues 516-542 (CPNMIGDRQCNKKVTKSTNGNWTCDKC) form a C4-type zinc finger.

Belongs to the replication factor A protein 1 family. Heterotrimer of RPA1, RPA2 and RPA3 (canonical replication protein A complex). Interacts with RPA2B. In terms of tissue distribution, expressed in root tips, roots, shoot apical meristem (SAM), young leaves, flag leaves and ears, and at lower levels in mature leaves.

The protein localises to the nucleus. In terms of biological role, component of the replication protein A complex (RPA) required for DNA recombination, repair and replication. The activity of RPA is mediated by single-stranded DNA binding and protein interactions. Plays an essential role in meiotic and somatic DNA repair, but is dispensable for DNA replication and homologous recombination. Is essential for normal progression through meiosis in pollen mother cells. Is involved in repair of double-strand DNA breaks (DSBs) induced by genotoxic stresses. In Oryza sativa subsp. japonica (Rice), this protein is Replication protein A 70 kDa DNA-binding subunit A (RPA1A).